A 190-amino-acid chain; its full sequence is Ion-translocating oxidoreductase complex subunit B (190 aa).

The hydrophobic stretch occupies residues 1–26; sequence MLTFWLAVATLSALALVAGAVLGFAA. Positions 32–90 constitute a 4Fe-4S domain; that stretch reads KTDPVAERIDALLPQSQCAQCGYPGCRPYAEAVAGGAPINKCVPGGEAVMLKIAAQLSV. [4Fe-4S] cluster is bound by residues Cys49, Cys52, Cys57, Cys73, Cys115, Cys118, Cys121, Cys125, Cys145, Cys148, Cys151, and Cys155. 4Fe-4S ferredoxin-type domains follow at residues 106–135 and 136–165; these read RVAW…GATR and AVHT…MRPL.

The protein belongs to the 4Fe4S bacterial-type ferredoxin family. RnfB subfamily. As to quaternary structure, the complex is composed of six subunits: RnfA, RnfB, RnfC, RnfD, RnfE and RnfG. [4Fe-4S] cluster is required as a cofactor.

It localises to the cell inner membrane. Its function is as follows. Part of a membrane-bound complex that couples electron transfer with translocation of ions across the membrane. In Sodalis glossinidius (strain morsitans), this protein is Ion-translocating oxidoreductase complex subunit B.